The following is a 388-amino-acid chain: Outer membrane protein assembly factor BamB (388 aa).

The signal sequence occupies residues methionine 1–alanine 21. Cysteine 22 carries N-palmitoyl cysteine lipidation. Cysteine 22 carries S-diacylglycerol cysteine lipidation.

It belongs to the BamB family. In terms of assembly, part of the Bam complex.

It is found in the cell outer membrane. In terms of biological role, part of the outer membrane protein assembly complex, which is involved in assembly and insertion of beta-barrel proteins into the outer membrane. This Kangiella koreensis (strain DSM 16069 / JCM 12317 / KCTC 12182 / SW-125) protein is Outer membrane protein assembly factor BamB.